The sequence spans 313 residues: 4-diphosphocytidyl-2-C-methyl-D-erythritol kinase (313 aa).

Residue lysine 10 is part of the active site. Position 95-105 (95-105 (PVTAGLGGGSS)) interacts with ATP. Aspartate 136 is an active-site residue. A disordered region spans residues 289 to 313 (HPRVSPWRSPRSASSRSTRRSSRPT). The span at 292 to 304 (VSPWRSPRSASSR) shows a compositional bias: low complexity.

It belongs to the GHMP kinase family. IspE subfamily.

The catalysed reaction is 4-CDP-2-C-methyl-D-erythritol + ATP = 4-CDP-2-C-methyl-D-erythritol 2-phosphate + ADP + H(+). Its pathway is isoprenoid biosynthesis; isopentenyl diphosphate biosynthesis via DXP pathway; isopentenyl diphosphate from 1-deoxy-D-xylulose 5-phosphate: step 3/6. In terms of biological role, catalyzes the phosphorylation of the position 2 hydroxy group of 4-diphosphocytidyl-2C-methyl-D-erythritol. This Anaeromyxobacter dehalogenans (strain 2CP-1 / ATCC BAA-258) protein is 4-diphosphocytidyl-2-C-methyl-D-erythritol kinase.